We begin with the raw amino-acid sequence, 340 residues long: Adenosine deaminase-like protein (340 aa).

Zn(2+) contacts are provided by His14 and His16. Residues His16, Asn18, His68, 100 to 103, and Gly173 each bind N(6)-methyl-AMP; that span reads TTPK. Zn(2+) is bound at residue His200. Positions 203, 278, and 279 each coordinate N(6)-methyl-AMP. Glu203 functions as the Proton donor in the catalytic mechanism. Asp278 serves as a coordination point for Zn(2+).

It belongs to the metallo-dependent hydrolases superfamily. Adenosine and AMP deaminases family. Monomer. The cofactor is Zn(2+).

The catalysed reaction is N(6)-methyl-AMP + H2O + H(+) = IMP + methylamine. In terms of biological role, catalyzes the hydrolysis of the free cytosolic methylated adenosine nucleotide N(6)-methyl-AMP (N6-mAMP) to produce inositol monophosphate (IMP) and methylamine. Is required for the catabolism of cytosolic N6-mAMP, which is derived from the degradation of mRNA containing N6-methylated adenine (m6A). This chain is Adenosine deaminase-like protein, found in Drosophila pseudoobscura pseudoobscura (Fruit fly).